The following is a 376-amino-acid chain: E3 ubiquitin-protein ligase RNF133 (376 aa).

The 103-residue stretch at 65–167 (SSTLKRVAGV…LKGTEIFHLI (103 aa)) folds into the PA domain. A helical membrane pass occupies residues 190 to 210 (YLVSFVIVTTATLAYFIFYHI). The RING-type; atypical zinc finger occupies 256-297 (CVICFERYKPNDIVRILTCKHFFHKNCIDPWILPHGTCPICK). Residues 327–376 (ETLSPSEEETNNEVSPAGTSDKVIHVEENPTSQNNDIQPHSVVEDVHPSP) are disordered. Polar residues predominate over residues 355 to 364 (NPTSQNNDIQ).

As to quaternary structure, interacts with E3 ligase UBE2J1. Post-translationally, auto-ubiquitinated. As to expression, expression is testis-specific.

It is found in the endoplasmic reticulum membrane. The enzyme catalyses S-ubiquitinyl-[E2 ubiquitin-conjugating enzyme]-L-cysteine + [acceptor protein]-L-lysine = [E2 ubiquitin-conjugating enzyme]-L-cysteine + N(6)-ubiquitinyl-[acceptor protein]-L-lysine.. It functions in the pathway protein modification; protein ubiquitination. Its function is as follows. Has E3 ubiquitin-protein ligase activity. Plays a role in male fecundity through the interaction with the E2 ubituitin-protein ligase UBE2J1. The protein is E3 ubiquitin-protein ligase RNF133 of Homo sapiens (Human).